The primary structure comprises 189 residues: UPF0301 protein Plut_0637 (189 aa).

It belongs to the UPF0301 (AlgH) family.

The sequence is that of UPF0301 protein Plut_0637 from Chlorobium luteolum (strain DSM 273 / BCRC 81028 / 2530) (Pelodictyon luteolum).